We begin with the raw amino-acid sequence, 603 residues long: Isocitrate dehydrogenase kinase/phosphatase (603 aa).

Residues 327-333 (APGIKGL) and lysine 348 each bind ATP. Residue aspartate 383 is part of the active site.

Belongs to the AceK family.

The protein localises to the cytoplasm. The catalysed reaction is L-seryl-[isocitrate dehydrogenase] + ATP = O-phospho-L-seryl-[isocitrate dehydrogenase] + ADP + H(+). Its function is as follows. Bifunctional enzyme which can phosphorylate or dephosphorylate isocitrate dehydrogenase (IDH) on a specific serine residue. This is a regulatory mechanism which enables bacteria to bypass the Krebs cycle via the glyoxylate shunt in response to the source of carbon. When bacteria are grown on glucose, IDH is fully active and unphosphorylated, but when grown on acetate or ethanol, the activity of IDH declines drastically concomitant with its phosphorylation. This is Isocitrate dehydrogenase kinase/phosphatase from Burkholderia thailandensis (strain ATCC 700388 / DSM 13276 / CCUG 48851 / CIP 106301 / E264).